A 460-amino-acid polypeptide reads, in one-letter code: Histidinol dehydrogenase (460 aa).

Substrate contacts are provided by S269, Q291, and H294. Zn(2+)-binding residues include Q291 and H294. Catalysis depends on proton acceptor residues E358 and H359. Residues H359, D392, E446, and H451 each coordinate substrate. D392 provides a ligand contact to Zn(2+). H451 contributes to the Zn(2+) binding site.

Belongs to the histidinol dehydrogenase family. It depends on Zn(2+) as a cofactor.

The catalysed reaction is L-histidinol + 2 NAD(+) + H2O = L-histidine + 2 NADH + 3 H(+). It participates in amino-acid biosynthesis; L-histidine biosynthesis; L-histidine from 5-phospho-alpha-D-ribose 1-diphosphate: step 9/9. Functionally, catalyzes the sequential NAD-dependent oxidations of L-histidinol to L-histidinaldehyde and then to L-histidine. The chain is Histidinol dehydrogenase from Rhodopirellula baltica (strain DSM 10527 / NCIMB 13988 / SH1).